Here is a 217-residue protein sequence, read N- to C-terminus: Adenylate kinase (217 aa).

Gly-10–Thr-15 contributes to the ATP binding site. The interval Ser-30–Val-59 is NMP. AMP is bound by residues Thr-31, Arg-36, Gly-57–Val-59, Gly-85–Arg-88, and Gln-92. Residues Gly-122 to Asp-159 are LID. Residues Arg-123 and Thr-132–Tyr-133 each bind ATP. Arg-156 and Arg-167 together coordinate AMP. Gly-203 lines the ATP pocket.

This sequence belongs to the adenylate kinase family. As to quaternary structure, monomer.

The protein localises to the cytoplasm. The catalysed reaction is AMP + ATP = 2 ADP. The protein operates within purine metabolism; AMP biosynthesis via salvage pathway; AMP from ADP: step 1/1. Its function is as follows. Catalyzes the reversible transfer of the terminal phosphate group between ATP and AMP. Plays an important role in cellular energy homeostasis and in adenine nucleotide metabolism. The protein is Adenylate kinase of Methylibium petroleiphilum (strain ATCC BAA-1232 / LMG 22953 / PM1).